Consider the following 290-residue polypeptide: 4-hydroxy-3-methylbut-2-enyl diphosphate reductase (290 aa).

Cys12 contacts [4Fe-4S] cluster. Residues His50 and His83 each contribute to the (2E)-4-hydroxy-3-methylbut-2-enyl diphosphate site. His50 and His83 together coordinate dimethylallyl diphosphate. 2 residues coordinate isopentenyl diphosphate: His50 and His83. Cys105 is a [4Fe-4S] cluster binding site. A (2E)-4-hydroxy-3-methylbut-2-enyl diphosphate-binding site is contributed by His133. Residue His133 participates in dimethylallyl diphosphate binding. Residue His133 coordinates isopentenyl diphosphate. Glu135 (proton donor) is an active-site residue. Position 173 (Thr173) interacts with (2E)-4-hydroxy-3-methylbut-2-enyl diphosphate. A [4Fe-4S] cluster-binding site is contributed by Cys202. Positions 230, 232, and 274 each coordinate (2E)-4-hydroxy-3-methylbut-2-enyl diphosphate. Ser230, Asn232, and Ser274 together coordinate dimethylallyl diphosphate. Residues Ser230, Asn232, and Ser274 each contribute to the isopentenyl diphosphate site.

It belongs to the IspH family. The cofactor is [4Fe-4S] cluster.

The enzyme catalyses isopentenyl diphosphate + 2 oxidized [2Fe-2S]-[ferredoxin] + H2O = (2E)-4-hydroxy-3-methylbut-2-enyl diphosphate + 2 reduced [2Fe-2S]-[ferredoxin] + 2 H(+). It carries out the reaction dimethylallyl diphosphate + 2 oxidized [2Fe-2S]-[ferredoxin] + H2O = (2E)-4-hydroxy-3-methylbut-2-enyl diphosphate + 2 reduced [2Fe-2S]-[ferredoxin] + 2 H(+). The protein operates within isoprenoid biosynthesis; dimethylallyl diphosphate biosynthesis; dimethylallyl diphosphate from (2E)-4-hydroxy-3-methylbutenyl diphosphate: step 1/1. It functions in the pathway isoprenoid biosynthesis; isopentenyl diphosphate biosynthesis via DXP pathway; isopentenyl diphosphate from 1-deoxy-D-xylulose 5-phosphate: step 6/6. Catalyzes the conversion of 1-hydroxy-2-methyl-2-(E)-butenyl 4-diphosphate (HMBPP) into a mixture of isopentenyl diphosphate (IPP) and dimethylallyl diphosphate (DMAPP). Acts in the terminal step of the DOXP/MEP pathway for isoprenoid precursor biosynthesis. In Nitratidesulfovibrio vulgaris (strain DP4) (Desulfovibrio vulgaris), this protein is 4-hydroxy-3-methylbut-2-enyl diphosphate reductase.